The sequence spans 411 residues: Multifunctional CCA protein (411 aa).

ATP contacts are provided by Gly-8 and Arg-11. Residues Gly-8 and Arg-11 each coordinate CTP. Positions 21 and 23 each coordinate Mg(2+). Positions 91, 137, and 140 each coordinate ATP. 3 residues coordinate CTP: Arg-91, Arg-137, and Arg-140. The region spanning 226–327 (TGVHVMLVID…LRFLQETDAL (102 aa)) is the HD domain.

Belongs to the tRNA nucleotidyltransferase/poly(A) polymerase family. Bacterial CCA-adding enzyme type 1 subfamily. In terms of assembly, monomer. Can also form homodimers and oligomers. The cofactor is Mg(2+). It depends on Ni(2+) as a cofactor.

The catalysed reaction is a tRNA precursor + 2 CTP + ATP = a tRNA with a 3' CCA end + 3 diphosphate. It carries out the reaction a tRNA with a 3' CCA end + 2 CTP + ATP = a tRNA with a 3' CCACCA end + 3 diphosphate. Its function is as follows. Catalyzes the addition and repair of the essential 3'-terminal CCA sequence in tRNAs without using a nucleic acid template. Adds these three nucleotides in the order of C, C, and A to the tRNA nucleotide-73, using CTP and ATP as substrates and producing inorganic pyrophosphate. tRNA 3'-terminal CCA addition is required both for tRNA processing and repair. Also involved in tRNA surveillance by mediating tandem CCA addition to generate a CCACCA at the 3' terminus of unstable tRNAs. While stable tRNAs receive only 3'-terminal CCA, unstable tRNAs are marked with CCACCA and rapidly degraded. In Methylobacillus flagellatus (strain ATCC 51484 / DSM 6875 / VKM B-1610 / KT), this protein is Multifunctional CCA protein.